The sequence spans 104 residues: Circadian clock oscillator protein KaiB (104 aa).

It belongs to the KaiB family. The KaiABC complex composition changes during the circadian cycle to control KaiC phosphorylation. Complexes KaiC(6), KaiA(2-4):KaiC(6), KaiB(6):KaiC(6) and KaiC(6):KaiB(6):KaiA(12) are among the most important forms, many form cooperatively. Undergoes a major conformational rearrangment; in the free state forms homotetramers as a dimer of dimers. When bound to the CI domain of KaiC switches to a monomeric thioredoxin-fold (KaiB(fs)). KaiB(fs) binds CikA, leading it to dephosphorylate phospho-RpaA.

Functionally, key component of the KaiABC oscillator complex, which constitutes the main circadian regulator in cyanobacteria. Complex composition changes during the circadian cycle to control KaiC phosphorylation. KaiA stimulates KaiC autophosphorylation, while KaiB sequesters KaiA, leading to KaiC autodephosphorylation. Phospho-Ser-431 KaiC accumulation triggers binding of KaiB to form the KaiB(6):KaiC(6) complex, leading to changes in output regulators CikA and SasA. KaiB switches to a thioredoxin-like fold (KaiB(fs)) when bound to KaiC. KaiB(6):KaiC(6) formation exposes a site for KaiA binding that sequesters KaiA from KaiC, making the KaiC(6):KaiB(6):KaiA(12) complex that results in KaiC autodephosphorylation. Its function is as follows. A metamorphic protein which reversibly switches between an inactive tetrameric fold and a rare, thioredoxin-like monomeric fold (KaiB(fs)). KaiB(fs) binds phospho-KaiC, KaiA and CikA. KaiA and CikA compete for binding to KaiB(fs), and KaiB(fs) and SasA compete for binding to KaiC, thus the clock oscillator and output signal pathway are tightly coupled. The chain is Circadian clock oscillator protein KaiB from Microcystis aeruginosa (strain NIES-843 / IAM M-2473).